Here is a 256-residue protein sequence, read N- to C-terminus: ATP synthase subunit a (256 aa).

The propeptide at 1 to 8 is removed in mature form; it reads MYQFNFIL. A run of 7 helical transmembrane segments spans residues 34-54, 92-112, 121-141, 148-168, 186-206, 209-229, and 230-250; these read ITNI…YHLL, YFPF…IGMV, HFIL…FLGL, FFSL…LVLI, ANIL…YNIM, GILF…FSGL, and ELAI…SYIK.

The protein belongs to the ATPase A chain family. F-type ATPases have 2 components, CF(1) - the catalytic core - and CF(0) - the membrane proton channel. CF(1) has five subunits: alpha(3), beta(3), gamma(1), delta(1), epsilon(1). CF(0) has three main subunits: a, b and c.

It is found in the mitochondrion inner membrane. Its function is as follows. Mitochondrial membrane ATP synthase (F(1)F(0) ATP synthase or Complex V) produces ATP from ADP in the presence of a proton gradient across the membrane which is generated by electron transport complexes of the respiratory chain. F-type ATPases consist of two structural domains, F(1) - containing the extramembraneous catalytic core and F(0) - containing the membrane proton channel, linked together by a central stalk and a peripheral stalk. During catalysis, ATP synthesis in the catalytic domain of F(1) is coupled via a rotary mechanism of the central stalk subunits to proton translocation. Key component of the proton channel; it may play a direct role in the translocation of protons across the membrane. This chain is ATP synthase subunit a (atp6), found in Emericella nidulans (Aspergillus nidulans).